Consider the following 318-residue polypeptide: Aspartate carbamoyltransferase catalytic subunit (318 aa).

Residues Arg-62 and Thr-63 each contribute to the carbamoyl phosphate site. Lys-90 lines the L-aspartate pocket. 3 residues coordinate carbamoyl phosphate: Arg-112, His-140, and Gln-143. Residues Arg-173 and Arg-227 each contribute to the L-aspartate site. Positions 268 and 269 each coordinate carbamoyl phosphate.

The protein belongs to the aspartate/ornithine carbamoyltransferase superfamily. ATCase family. Heterododecamer (2C3:3R2) of six catalytic PyrB chains organized as two trimers (C3), and six regulatory PyrI chains organized as three dimers (R2).

The enzyme catalyses carbamoyl phosphate + L-aspartate = N-carbamoyl-L-aspartate + phosphate + H(+). It participates in pyrimidine metabolism; UMP biosynthesis via de novo pathway; (S)-dihydroorotate from bicarbonate: step 2/3. In terms of biological role, catalyzes the condensation of carbamoyl phosphate and aspartate to form carbamoyl aspartate and inorganic phosphate, the committed step in the de novo pyrimidine nucleotide biosynthesis pathway. This chain is Aspartate carbamoyltransferase catalytic subunit, found in Desulfotalea psychrophila (strain LSv54 / DSM 12343).